We begin with the raw amino-acid sequence, 251 residues long: Retinoic acid early-inducible protein 1-epsilon (251 aa).

The first 28 residues, 1 to 28 (MAKAAVTKRHHFMIQKLLILLSYGYTNG), serve as a signal peptide directing secretion. A disulfide bridge links Cys37 with Cys56. 5 N-linked (GlcNAc...) asparagine glycosylation sites follow: Asn38, Asn70, Asn83, Asn141, and Asn154. Cys88 and Cys188 are joined by a disulfide. The tract at residues 196–228 (LKQSKEKPRSTSRSPSITQLTSTSPLPPPSHST) is disordered. Over residues 209–219 (SPSITQLTSTS) the composition is skewed to low complexity. Ser225 carries the GPI-anchor amidated serine lipid modification. Residues 226 to 251 (HSTSKKGFISVGLIFISLLFAFAFAM) constitute a propeptide, removed in mature form.

Belongs to the NKG2D ligand family. In terms of processing, glycosylated.

The protein resides in the cell membrane. In terms of biological role, acts as a ligand for KLRK1. The protein is Retinoic acid early-inducible protein 1-epsilon (Raet1e) of Mus musculus (Mouse).